The chain runs to 743 residues: MATLKPPESQLLKTLTSILTSEKTHFLETLNPYIPQITQPLLTSLLSSPSLAKKPETLVSFFQWAQTSIPEAFPSDSPLPLISVVRSLLSHHKFADAKSLLVSYIRTSDASLSLCNSLLHPNLHLSPPPSKALFDIALSAYLHEGKPHVALQIFQKMIRLKLKPNLLTCNTLLIGLVRYPSSFSISSAREVFDDMVKIGVSLNVQTFNVLVNGYCLEGKLEDALGMLERMVSEFKVNPDNVTYNTILKAMSKKGRLSDLKELLLDMKKNGLVPNRVTYNNLVYGYCKLGSLKEAFQIVELMKQTNVLPDLCTYNILINGLCNAGSMREGLELMDAMKSLKLQPDVVTYNTLIDGCFELGLSLEARKLMEQMENDGVKANQVTHNISLKWLCKEEKREAVTRKVKELVDMHGFSPDIVTYHTLIKAYLKVGDLSGALEMMREMGQKGIKMNTITLNTILDALCKERKLDEAHNLLNSAHKRGFIVDEVTYGTLIMGFFREEKVEKALEMWDEMKKVKITPTVSTFNSLIGGLCHHGKTELAMEKFDELAESGLLPDDSTFNSIILGYCKEGRVEKAFEFYNESIKHSFKPDNYTCNILLNGLCKEGMTEKALNFFNTLIEEREVDTVTYNTMISAFCKDKKLKEAYDLLSEMEEKGLEPDRFTYNSFISLLMEDGKLSETDELLKKFSGKFGSMKRDLQVETEKNPATSESKEELNTEAIAYSDVIDELCSRGRLKEHSRSYTS.

PPR repeat units lie at residues 130–164 (SKAL…KLKP), 165–202 (NLLT…GVSL), 203–233 (NVQT…MVSE), 239–273 (DNVT…GLVP), 274–308 (NRVT…NVLP), 309–343 (DLCT…KLQP), 344–378 (DVVT…GVKA), 379–414 (NQVT…GFSP), 415–449 (DIVT…GIKM), 450–484 (NTIT…GFIV), 485–519 (DEVT…KITP), 520–554 (TVST…GLLP), 555–589 (DDST…SFKP), 590–620 (DNYT…LIEE), 624–658 (DTVT…GLEP), and 659–689 (DRFT…FSGK).

The protein belongs to the PPR family. P subfamily.

The polypeptide is Pentatricopeptide repeat-containing protein At2g16880 (Arabidopsis thaliana (Mouse-ear cress)).